Here is an 820-residue protein sequence, read N- to C-terminus: Phenylalanine--tRNA ligase beta subunit (820 aa).

A tRNA-binding domain is found at 42-154 (KGGLEGLVIG…AEAVPGTLAK (113 aa)). In terms of domain architecture, B5 spans 413-489 (PQDFMVELSY…RIYGYNNVEI (77 aa)). Mg(2+) contacts are provided by Asp467, Asp473, Glu476, and Asp477. Residues 727 to 820 (SKFPAVKRDL…LEDKLNAKLR (94 aa)) form the FDX-ACB domain.

Belongs to the phenylalanyl-tRNA synthetase beta subunit family. Type 1 subfamily. As to quaternary structure, tetramer of two alpha and two beta subunits. Mg(2+) serves as cofactor.

The protein resides in the cytoplasm. It catalyses the reaction tRNA(Phe) + L-phenylalanine + ATP = L-phenylalanyl-tRNA(Phe) + AMP + diphosphate + H(+). This Bacteroides thetaiotaomicron (strain ATCC 29148 / DSM 2079 / JCM 5827 / CCUG 10774 / NCTC 10582 / VPI-5482 / E50) protein is Phenylalanine--tRNA ligase beta subunit.